Reading from the N-terminus, the 370-residue chain is Mesoderm posterior protein 2 (370 aa).

3 disordered regions span residues 51–89 (PSQPAGPARSTRTTQATAPRRTRPAPAGGQRQSASEREK), 231–265 (SLERAADSSPWAPPQACPGMQMSPEPRNKTGHWTQ), and 325–350 (TSEDQGSSPALQLPVASPTPSSGLQL). Low complexity predominate over residues 57 to 77 (PARSTRTTQATAPRRTRPAPA). The bHLH domain maps to 79–133 (GQRQSASEREKLRMRTLARALQELRRFLPPSVAPAGQSLTKIETLRLAIRYIGHL). The segment covering 325 to 334 (TSEDQGSSPA) has biased composition (polar residues). Residues 326 to 330 (SEDQG) are may contain a degradation domain.

In terms of processing, degraded by the proteasome. Phosphorylated.

Its subcellular location is the nucleus. In terms of biological role, transcription factor with important role in somitogenesis. Defines the rostrocaudal patterning of the somite by participating in distinct Notch pathways. Also regulates the FGF signaling pathway. Specifies the rostral half of the somites. Generates rostro-caudal polarity of somites by down-regulating in the presumptive rostral domain DLL1, a Notch ligand. Participates in the segment border formation by activating in the anterior presomitic mesoderm LFNG, a negative regulator of DLL1-Notch signaling. Acts as a strong suppressor of Notch activity. Together with MESP1 is involved in the epithelialization of somitic mesoderm and in the development of cardiac mesoderm. May play a role with Tcf15 in the differentiation of myotomal and sclerotomal cells by regulating Pax family genes. Also controls the expression of the protocadherin PCDH8/PAPC, EPHA4, RIPPLY2, NOTCH2, FGFR1, and CER1. Binds to the E-boxes within the EPH4A and RIPPLY2 enhancers. The sequence is that of Mesoderm posterior protein 2 (Mesp2) from Mus musculus (Mouse).